Here is a 213-residue protein sequence, read N- to C-terminus: Pyrrolidone-carboxylate peptidase (213 aa).

Catalysis depends on residues Glu78, Cys141, and His165.

This sequence belongs to the peptidase C15 family. Homotetramer.

Its subcellular location is the cytoplasm. The enzyme catalyses Release of an N-terminal pyroglutamyl group from a polypeptide, the second amino acid generally not being Pro.. Functionally, removes 5-oxoproline from various penultimate amino acid residues except L-proline. The sequence is that of Pyrrolidone-carboxylate peptidase from Enterococcus faecalis (strain ATCC 700802 / V583).